A 740-amino-acid polypeptide reads, in one-letter code: 1,4-alpha-glucan branching enzyme GlgB (740 aa).

The Nucleophile role is filled by Asp419. Residue Glu472 is the Proton donor of the active site.

Belongs to the glycosyl hydrolase 13 family. GlgB subfamily. As to quaternary structure, monomer.

It catalyses the reaction Transfers a segment of a (1-&gt;4)-alpha-D-glucan chain to a primary hydroxy group in a similar glucan chain.. Its pathway is glycan biosynthesis; glycogen biosynthesis. Its function is as follows. Catalyzes the formation of the alpha-1,6-glucosidic linkages in glycogen by scission of a 1,4-alpha-linked oligosaccharide from growing alpha-1,4-glucan chains and the subsequent attachment of the oligosaccharide to the alpha-1,6 position. The chain is 1,4-alpha-glucan branching enzyme GlgB from Paramagnetospirillum magneticum (strain ATCC 700264 / AMB-1) (Magnetospirillum magneticum).